The sequence spans 934 residues: Diacylglycerol kinase theta (934 aa).

Residues 1–50 (MAAAAEPGARTWPGSGSPRLGSPAGSPVLGISGRTRPGSGPERTSRAIGS) are disordered. Phosphoserine is present on residues Ser22 and Ser26. 3 consecutive Phorbol-ester/DAG-type zinc fingers follow at residues 54-102 (GHSF…KTPC), 115-162 (AHCF…CSDC), and 177-228 (HHHW…APEC). In terms of domain architecture, Ras-associating spans 387–486 (TQEILKIYPG…TRFYVAETRA (100 aa)). 2 consecutive short sequence motifs (LXXLL motif) follow at residues 547 to 551 (LYMLA) and 566 to 570 (LPDVL). In terms of domain architecture, DAGKc spans 576–713 (PDCCPLLVFV…MDRWTILLDA (138 aa)). A compositionally biased stretch (basic residues) spans 905-916 (LRKAKQKPRKAG). The segment at 905–934 (LRKAKQKPRKAGANRDTRVDTLPAPEGNPL) is disordered.

This sequence belongs to the eukaryotic diacylglycerol kinase family. In terms of assembly, interacts with RHOA (constitutively activated, GTP-bound); the interaction inhibits DGKQ. Interacts with PRKCE. Interacts with PRKCH. Interacts with PLCB1. Interacts with NR5A1; the interaction requires both LXXLL motifs in DGKQ and is required for full phosphatidic acid-mediated activation of NR5A1. Post-translationally, phosphorylated by PRKCE and PRKCH in vitro. As to expression, widely expressed in all brain regions, including the cortex and hippocampus with a specific expression in neuronal cells (at protein level).

It is found in the cytoplasm. The protein resides in the cytosol. It localises to the cell membrane. The protein localises to the synapse. Its subcellular location is the cytoskeleton. It is found in the nucleus. The protein resides in the nucleus speckle. It localises to the nucleus matrix. The enzyme catalyses a 1,2-diacyl-sn-glycerol + ATP = a 1,2-diacyl-sn-glycero-3-phosphate + ADP + H(+). It carries out the reaction a 1-O-alkyl-sn-glycerol + ATP = a 1-O-alkyl-sn-glycero-3-phosphate + ADP + H(+). It catalyses the reaction 1-O-alkyl-2-acyl-sn-glycerol + ATP = 1-O-alkyl-2-acyl-sn-glycero-3-phosphate + ADP + H(+). The catalysed reaction is 1,2-di-(9Z-octadecenoyl)-sn-glycerol + ATP = 1,2-di-(9Z-octadecenoyl)-sn-glycero-3-phosphate + ADP + H(+). The enzyme catalyses 1-O-hexadecyl-sn-glycerol + ATP = 1-O-hexadecyl-sn-glycero-3-phosphate + ADP + H(+). It carries out the reaction 1-O-hexadecyl-2-acetyl-sn-glycerol + ATP = 1-O-hexadecyl-2-acetyl-sn-glycero-3-phosphate + ADP + H(+). It catalyses the reaction 1-octadecanoyl-2-(5Z,8Z,11Z,14Z-eicosatetraenoyl)-sn-glycerol + ATP = 1-octadecanoyl-2-(5Z,8Z,11Z,14Z-eicosatetraenoyl)-sn-glycero-3-phosphate + ADP + H(+). Its pathway is lipid metabolism; glycerolipid metabolism. With respect to regulation, activated by phosphatidylserine. Functionally, diacylglycerol kinase that converts diacylglycerol/DAG into phosphatidic acid/phosphatidate/PA and regulates the respective levels of these two bioactive lipids. Thereby, acts as a central switch between the signaling pathways activated by these second messengers with different cellular targets and opposite effects in numerous biological processes. Within the adrenocorticotropic hormone signaling pathway, produces phosphatidic acid which in turn activates NR5A1 and subsequent steroidogenic gene transcription. Also functions downstream of the nerve growth factor signaling pathway being specifically activated in the nucleus by the growth factor. Through its diacylglycerol activity also regulates synaptic vesicle endocytosis. The polypeptide is Diacylglycerol kinase theta (Dgkq) (Mus musculus (Mouse)).